A 283-amino-acid polypeptide reads, in one-letter code: NAD kinase (283 aa).

The Proton acceptor role is filled by Asp-65. Residues 65 to 66, 139 to 140, Arg-150, Arg-167, Asp-169, 180 to 185, and Gln-239 each bind NAD(+); these read DG, ND, and TGYSVS.

Belongs to the NAD kinase family. A divalent metal cation serves as cofactor.

The protein localises to the cytoplasm. It carries out the reaction NAD(+) + ATP = ADP + NADP(+) + H(+). Its function is as follows. Involved in the regulation of the intracellular balance of NAD and NADP, and is a key enzyme in the biosynthesis of NADP. Catalyzes specifically the phosphorylation on 2'-hydroxyl of the adenosine moiety of NAD to yield NADP. The chain is NAD kinase from Nitratidesulfovibrio vulgaris (strain DSM 19637 / Miyazaki F) (Desulfovibrio vulgaris).